The following is a 452-amino-acid chain: MLIEYLIRITVMVITSERLLILMGLCDESFHFPVMIRVVFNAAVAIVIALVMSKLYKVLFAPLDLRRKLEDVGYVHHDHSVSREENIRDTQRRKKLGNTPPVFPNGWFKVADSTWIKKGQVKSIYFFGEQLALFRNKRGLLRALDAYCPHLLANMAAGGKVVNSDCLECPFHGWKFSGETGKLVDVPYAQKVPTFVSVKKWSCCEVDGMAYLWYHCDGGEPKWVLPSSVTINTLKYAGKTEHIINSHIQDIPENAADISHLDHLHKPVIGSDVEKTNESLLNNLIFHSIQASWKPPTDPNEPHRSTMSIKDNIHLSIFNIKIPLLYLEFEIDQIGPGAVHIHVRTPFFRGLMLQNVTPIEPFVQKLTHSFYVSPWVPVCIAKAFYLLETTQIERDILMWNNKTYFRQPVLVKEESALAKHRRWYQQFYSENSPRMNHRGDLVYPGKPKLADW.

The next 2 membrane-spanning stretches (helical) occupy residues 6–26 and 32–52; these read LIRITVMVITSERLLILMGLC and FPVMIRVVFNAAVAIVIALVM. The region spanning 107–212 is the Rieske domain; it reads WFKVADSTWI…CCEVDGMAYL (106 aa). 4 residues coordinate [2Fe-2S] cluster: C148, H150, C169, and H172.

The protein belongs to the cholesterol 7-desaturase family. The cofactor is [2Fe-2S] cluster.

It is found in the membrane. It carries out the reaction cholesterol + NADPH + O2 + H(+) = 7-dehydrocholesterol + NADP(+) + 2 H2O. The enzyme catalyses cholesterol + NADH + O2 + H(+) = 7-dehydrocholesterol + NAD(+) + 2 H2O. It functions in the pathway steroid hormone biosynthesis; dafachronic acid biosynthesis. Functionally, catalyzes the production of 7-dehydrocholesterol (7-DHC or cholesta-5,7-dien-3beta-ol) by inserting a double bond (desaturating) at the C7-C8 single bond of cholesterol. Essential regulator of steroid biosynthesis as this reaction is the first step in the synthesis of the steroid hormone Delta(7)-dafachronic acid. This is Cholesterol 7-desaturase nvd 2 from Ciona intestinalis (Transparent sea squirt).